Here is a 474-residue protein sequence, read N- to C-terminus: UDP-N-acetylmuramate--L-alanine ligase (474 aa).

115–121 (GTHGKTT) is an ATP binding site.

It belongs to the MurCDEF family.

It is found in the cytoplasm. The enzyme catalyses UDP-N-acetyl-alpha-D-muramate + L-alanine + ATP = UDP-N-acetyl-alpha-D-muramoyl-L-alanine + ADP + phosphate + H(+). Its pathway is cell wall biogenesis; peptidoglycan biosynthesis. Its function is as follows. Cell wall formation. This is UDP-N-acetylmuramate--L-alanine ligase from Novosphingobium aromaticivorans (strain ATCC 700278 / DSM 12444 / CCUG 56034 / CIP 105152 / NBRC 16084 / F199).